Consider the following 860-residue polypeptide: Leucine--tRNA ligase (860 aa).

A 'HIGH' region motif is present at residues 42 to 52 (PYPSGRLHMGH). The short motif at 619–623 (KMSKS) is the 'KMSKS' region element. Lysine 622 contacts ATP.

Belongs to the class-I aminoacyl-tRNA synthetase family.

Its subcellular location is the cytoplasm. It catalyses the reaction tRNA(Leu) + L-leucine + ATP = L-leucyl-tRNA(Leu) + AMP + diphosphate. This chain is Leucine--tRNA ligase, found in Histophilus somni (strain 129Pt) (Haemophilus somnus).